The primary structure comprises 188 residues: dCTP deaminase (188 aa).

DCTP is bound by residues 111–116 (KSTYAR), 135–137 (TLE), Gln156, Tyr170, and Gln180. The Proton donor/acceptor role is filled by Glu137.

Belongs to the dCTP deaminase family. In terms of assembly, homotrimer.

The catalysed reaction is dCTP + H2O + H(+) = dUTP + NH4(+). It functions in the pathway pyrimidine metabolism; dUMP biosynthesis; dUMP from dCTP (dUTP route): step 1/2. Its function is as follows. Catalyzes the deamination of dCTP to dUTP. In Dechloromonas aromatica (strain RCB), this protein is dCTP deaminase.